The primary structure comprises 747 residues: Polyribonucleotide nucleotidyltransferase (747 aa).

Positions 487 and 493 each coordinate Mg(2+). Residues 554–613 (PSTTTIKIDKDKIRDIIGPGGKVIKEICETSGAKIDISDDGSVSVYASDRDKLKVALDKI) form the KH domain. The region spanning 623–691 (GEIFNGTVMK…NKGKAKLTIK (69 aa)) is the S1 motif domain. Residues 691–747 (KNADKDKSSNNPKPKNNVNNAKENSEPERRDSSKKRAWNEDSNNDKEEAITERKYFN) are disordered. Positions 699–712 (SNNPKPKNNVNNAK) are enriched in low complexity. Positions 727–747 (AWNEDSNNDKEEAITERKYFN) are enriched in basic and acidic residues.

This sequence belongs to the polyribonucleotide nucleotidyltransferase family. It depends on Mg(2+) as a cofactor.

The protein localises to the cytoplasm. The enzyme catalyses RNA(n+1) + phosphate = RNA(n) + a ribonucleoside 5'-diphosphate. Functionally, involved in mRNA degradation. Catalyzes the phosphorolysis of single-stranded polyribonucleotides processively in the 3'- to 5'-direction. The chain is Polyribonucleotide nucleotidyltransferase from Rickettsia felis (strain ATCC VR-1525 / URRWXCal2) (Rickettsia azadi).